The sequence spans 1123 residues: Leucine-rich repeat receptor-like protein kinase PEPR1 (1123 aa).

An N-terminal signal peptide occupies residues 1 to 28 (MKNLGGLFKILLLFFCLFLSTHIISVSC). Residues 29-769 (LNSDGLTLLS…SRKSGLSTWQ (741 aa)) lie on the Extracellular side of the membrane. The stretch at 31–53 (SDGLTLLSLLKHLDRVPPQVTST) is one LRR 1 repeat. 4 N-linked (GlcNAc...) asparagine glycosylation sites follow: N57, N81, N110, and N121. 7 LRR repeats span residues 74 to 98 (SKNV…IGEL), 99 to 122 (KSLQ…LGNC), 124 to 145 (KLAT…TLDS), 146 to 170 (LKRL…LFRI), 171 to 194 (PKLQ…IGDA), 196 to 218 (ELVE…IGNS), and 219 to 243 (SSLQ…NLLG). 2 N-linked (GlcNAc...) asparagine glycosylation sites follow: N182 and N217. N-linked (GlcNAc...) asparagine glycosylation is found at N244, N252, N289, N302, N316, N321, and N337. 20 LRR repeats span residues 245 to 266 (LTTL…SPNC), 267 to 290 (KNLL…LGNC), 292 to 314 (SLDA…LGML), 315 to 338 (KNLT…LGNC), 340 to 362 (SLNL…LGKL), 363 to 386 (RKLE…IWKS), 388 to 410 (SLTQ…MTEM), 412 to 434 (KLKI…LGVN), 435 to 458 (SSLE…LCHG), 459 to 482 (RKLR…IGHC), 484 to 505 (TIRR…FSQD), 506 to 529 (HSLS…LGSC), 530 to 553 (KNLS…LGNL), 554 to 577 (QNLG…LSNC), 579 to 600 (SLER…NFSN), 601 to 625 (WKGL…LPEL), 626 to 650 (KKLS…GLIE), 652 to 674 (LIYD…LGDL), 675 to 696 (IKLT…VLKG), and 697 to 721 (LTSL…LEGQ). N-linked (GlcNAc...) asparagine glycans are attached at residues N398, N420, and N434. The N-linked (GlcNAc...) asparagine glycan is linked to N494. Residues N531, N536, N560, N591, and N597 are each glycosylated (N-linked (GlcNAc...) asparagine). Residues N681 and N686 are each glycosylated (N-linked (GlcNAc...) asparagine). The N-linked (GlcNAc...) asparagine glycan is linked to N745. A helical transmembrane segment spans residues 770 to 790 (IVLIAVLSSLLVLVVVLALVF). The Cytoplasmic portion of the chain corresponds to 791–1123 (ICLRRRKGRP…ARSCSSDSVR (333 aa)). T824 bears the Phosphothreonine mark. A Protein kinase domain is found at 827–1115 (LNEKYTIGRG…LLEDVKHLAR (289 aa)). Residues 833–841 (IGRGAHGIV) and K855 contribute to the ATP site. Residues Y901 and Y941 each carry the phosphotyrosine modification. D954 serves as the catalytic Proton acceptor. Position 995 is a phosphotyrosine (Y995).

It belongs to the protein kinase superfamily. Ser/Thr protein kinase family. Interacts with PEP1 and BAK1. Interacts with BIK1 and PBL1. Post-translationally, N-glycosylated.

The protein resides in the cell membrane. It carries out the reaction L-seryl-[protein] + ATP = O-phospho-L-seryl-[protein] + ADP + H(+). The catalysed reaction is L-threonyl-[protein] + ATP = O-phospho-L-threonyl-[protein] + ADP + H(+). Its function is as follows. Acts as a receptor for PEP defense peptides. Unlike typical immune receptors, senses an endogenous elicitor that potentiates pathogen-associated molecular pattern (PAMP)-inducible plant responses. Involved in PAMP-triggered immunity (PTI) signaling. Interacts with and phosphorylates the kinase BIK1, a central rate-limiting kinase in PTI signaling. The sequence is that of Leucine-rich repeat receptor-like protein kinase PEPR1 (PEPR1) from Arabidopsis thaliana (Mouse-ear cress).